The following is a 317-amino-acid chain: Ribosomal protein L11 methyltransferase (317 aa).

S-adenosyl-L-methionine-binding residues include threonine 158, glycine 179, aspartate 201, and asparagine 244.

It belongs to the methyltransferase superfamily. PrmA family.

It localises to the cytoplasm. It carries out the reaction L-lysyl-[protein] + 3 S-adenosyl-L-methionine = N(6),N(6),N(6)-trimethyl-L-lysyl-[protein] + 3 S-adenosyl-L-homocysteine + 3 H(+). In terms of biological role, methylates ribosomal protein L11. The sequence is that of Ribosomal protein L11 methyltransferase from Streptococcus pyogenes serotype M28 (strain MGAS6180).